Here is a 509-residue protein sequence, read N- to C-terminus: Photosystem II CP47 reaction center protein (509 aa).

6 helical membrane-spanning segments follow: residues 21-36 (SVHI…WAGS), 101-115 (IVFS…IWHW), 140-156 (GIHL…FGAF), 203-218 (IAAG…FHLS), 237-252 (VLSS…AFVV), and 457-472 (SFAL…HGAR).

Belongs to the PsbB/PsbC family. PsbB subfamily. As to quaternary structure, PSII is composed of 1 copy each of membrane proteins PsbA, PsbB, PsbC, PsbD, PsbE, PsbF, PsbH, PsbI, PsbJ, PsbK, PsbL, PsbM, PsbT, PsbX, PsbY, PsbZ, Psb30/Ycf12, at least 3 peripheral proteins of the oxygen-evolving complex and a large number of cofactors. It forms dimeric complexes. Binds multiple chlorophylls. PSII binds additional chlorophylls, carotenoids and specific lipids. serves as cofactor.

The protein resides in the plastid. It is found in the chloroplast thylakoid membrane. In terms of biological role, one of the components of the core complex of photosystem II (PSII). It binds chlorophyll and helps catalyze the primary light-induced photochemical processes of PSII. PSII is a light-driven water:plastoquinone oxidoreductase, using light energy to abstract electrons from H(2)O, generating O(2) and a proton gradient subsequently used for ATP formation. In Cicer arietinum (Chickpea), this protein is Photosystem II CP47 reaction center protein.